The primary structure comprises 313 residues: Myeloma-overexpressed gene protein (313 aa).

Positions 107 to 129 (ERNKGDKGAQTGAGLSQEAEDVD) are disordered.

The chain is Myeloma-overexpressed gene protein (MYEOV) from Homo sapiens (Human).